The following is a 123-amino-acid chain: Con-ikot-ikot (123 aa).

Residues 1–18 (MAMNMSMTLCMFVMVVVA) form the signal peptide. Positions 19 to 37 (ATVIDSTQLQEPDLSRMRR) are excised as a propeptide. 5 disulfide bridges follow: C49–C80, C50–C89, C57–C72, C90–C118, and C96–C113.

As to quaternary structure, homodimer; disulfide-linked. In terms of tissue distribution, expressed by the venom duct.

It localises to the secreted. In terms of biological role, potently and selectively blocks the desensitization of ionotropic glutamate AMPA receptors (GRIA1, GRIA2, GRIA3 and GRIA4). Binds to a different site than does the drug cyclothiazide. The toxin acts like a straitjacket on the 'gating ring' of the ligand-binding domain (LBD) of the receptor. It does so by restraining the domains via both intra- and interdimer cross-links such that agonist-induced closure of the LBD 'clamshells' is transduced into an irislike expansion of the gating ring. Compared to other desensitization blockers, it is a poor stabilizer of the open channel because toxin-bound AMPA receptors undergo frequent brief closures. In vitro, application of the toxin to hippocampal slices causes a large and rapid increase in resting AMPA receptor-mediated current leading to neuronal death. The sequence is that of Con-ikot-ikot from Conus striatus (Striated cone).